The sequence spans 484 residues: Malonate-semialdehyde dehydrogenase 2 (484 aa).

NAD(+) contacts are provided by phenylalanine 153, lysine 177, glutamate 180, arginine 181, serine 230, and threonine 252. Cysteine 285 functions as the Nucleophile in the catalytic mechanism. Glutamate 385 is a binding site for NAD(+).

It belongs to the aldehyde dehydrogenase family. IolA subfamily. In terms of assembly, homotetramer.

The catalysed reaction is 3-oxopropanoate + NAD(+) + CoA + H2O = hydrogencarbonate + acetyl-CoA + NADH + H(+). It carries out the reaction 2-methyl-3-oxopropanoate + NAD(+) + CoA + H2O = propanoyl-CoA + hydrogencarbonate + NADH + H(+). Its pathway is polyol metabolism; myo-inositol degradation into acetyl-CoA; acetyl-CoA from myo-inositol: step 7/7. In terms of biological role, catalyzes the oxidation of malonate semialdehyde (MSA) and methylmalonate semialdehyde (MMSA) into acetyl-CoA and propanoyl-CoA, respectively. Is involved in a myo-inositol catabolic pathway. Bicarbonate, and not CO2, is the end-product of the enzymatic reaction. The protein is Malonate-semialdehyde dehydrogenase 2 of Geobacillus kaustophilus (strain HTA426).